A 546-amino-acid polypeptide reads, in one-letter code: Cytochrome P450 monooxygenase alnH (546 aa).

Residues 11 to 31 form a helical membrane-spanning segment; that stretch reads VPYSVPLLGSTVVILIGFIAI. Residues N146, N258, and N425 are each glycosylated (N-linked (GlcNAc...) asparagine). Residue C445 participates in heme binding.

The protein belongs to the cytochrome P450 family. The cofactor is heme.

The protein resides in the membrane. It participates in polyketide biosynthesis. Cytochrome P450 monooxygenase; part of the gene cluster that mediates the biosynthesis of asperlin, a polyketide showing anti-inflammatory, antitumor and antibiotic activities. The first step of the asperlin biosynthesis is the production of the intermediate 2,4,6-octatrienoic acid by the highly redusing polyketide synthase alnA with cleavage of the PKS product by the esterase alnB. 2,4,6-octatrienoic acid is further converted to asperlin via several steps involving the remaining enzymes from the cluster. This Emericella nidulans (strain FGSC A4 / ATCC 38163 / CBS 112.46 / NRRL 194 / M139) (Aspergillus nidulans) protein is Cytochrome P450 monooxygenase alnH.